The chain runs to 369 residues: Protein RecA (369 aa).

77–84 (GPESSGKT) provides a ligand contact to ATP.

It belongs to the RecA family.

Its subcellular location is the cytoplasm. In terms of biological role, can catalyze the hydrolysis of ATP in the presence of single-stranded DNA, the ATP-dependent uptake of single-stranded DNA by duplex DNA, and the ATP-dependent hybridization of homologous single-stranded DNAs. It interacts with LexA causing its activation and leading to its autocatalytic cleavage. The protein is Protein RecA of Corynebacterium pseudotuberculosis (strain C231).